Consider the following 146-residue polypeptide: Hemoglobin subunit beta (146 aa).

Residues 2-146 (QWSDSERTII…VVMFLGKQYH (145 aa)) enclose the Globin domain. The heme b site is built by His63 and His92.

This sequence belongs to the globin family. Heterotetramer of two alpha chains and two beta chains. As to expression, red blood cells.

Involved in oxygen transport from the lung to the various peripheral tissues. This is Hemoglobin subunit beta (hbb) from Artedidraco orianae (Barbeled plunderfish).